The following is a 226-amino-acid chain: Hand transcription factor 1 (226 aa).

A compositionally biased stretch (polar residues) spans 1 to 15 (MVKSTTAGNNAVSSL). A disordered region spans residues 1–35 (MVKSTTAGNNAVSSLESTDSKKSRKEKSREKEHRR). The segment at 23-36 (SRKEKSREKEHRRA) is basic motif. The 55-residue stretch at 23–77 (SRKEKSREKEHRRAQCINSAFEILQQHIPYLKSEERKSLPKIKTLRLAMQYIDHL) folds into the bHLH domain. Residues 37–77 (QCINSAFEILQQHIPYLKSEERKSLPKIKTLRLAMQYIDHL) are helix-loop-helix motif.

It is found in the nucleus. In terms of biological role, probable transcription factor which regulates early embryonic myogenesis, in cooperation with transcription factors unc-120 and hlh-1. Involved in controlling the number and position of somatic gonadal precursor cells (SGPs) in the gonadal primordium, and embryonic body shape. This chain is Hand transcription factor 1, found in Caenorhabditis elegans.